Consider the following 350-residue polypeptide: S-adenosylmethionine:tRNA ribosyltransferase-isomerase (350 aa).

The protein belongs to the QueA family. Monomer.

Its subcellular location is the cytoplasm. The catalysed reaction is 7-aminomethyl-7-carbaguanosine(34) in tRNA + S-adenosyl-L-methionine = epoxyqueuosine(34) in tRNA + adenine + L-methionine + 2 H(+). Its pathway is tRNA modification; tRNA-queuosine biosynthesis. Its function is as follows. Transfers and isomerizes the ribose moiety from AdoMet to the 7-aminomethyl group of 7-deazaguanine (preQ1-tRNA) to give epoxyqueuosine (oQ-tRNA). The sequence is that of S-adenosylmethionine:tRNA ribosyltransferase-isomerase from Aliivibrio fischeri (strain ATCC 700601 / ES114) (Vibrio fischeri).